The chain runs to 316 residues: Glutamyl-Q tRNA(Asp) synthetase (316 aa).

L-glutamate contacts are provided by residues 13-17 (RFAPS) and Asp-49. The 'HIGH' region signature appears at 16-26 (PSPSGDLHFGS). Residues Cys-105, Cys-107, Tyr-119, and Cys-123 each coordinate Zn(2+). 2 residues coordinate L-glutamate: Tyr-176 and Arg-194. A 'KMSKS' region motif is present at residues 232–236 (KLSKQ). ATP is bound at residue Lys-235.

This sequence belongs to the class-I aminoacyl-tRNA synthetase family. GluQ subfamily. Zn(2+) serves as cofactor.

Catalyzes the tRNA-independent activation of glutamate in presence of ATP and the subsequent transfer of glutamate onto a tRNA(Asp). Glutamate is transferred on the 2-amino-5-(4,5-dihydroxy-2-cyclopenten-1-yl) moiety of the queuosine in the wobble position of the QUC anticodon. The protein is Glutamyl-Q tRNA(Asp) synthetase of Photorhabdus laumondii subsp. laumondii (strain DSM 15139 / CIP 105565 / TT01) (Photorhabdus luminescens subsp. laumondii).